The chain runs to 133 residues: Large ribosomal subunit protein eL32 (133 aa).

Belongs to the eukaryotic ribosomal protein eL32 family.

The chain is Large ribosomal subunit protein eL32 (rpl32) from Dictyostelium discoideum (Social amoeba).